The following is a 375-amino-acid chain: 4-hydroxy-3-methylbut-2-en-1-yl diphosphate synthase (flavodoxin) (375 aa).

Positions 268, 271, 303, and 310 each coordinate [4Fe-4S] cluster.

The protein belongs to the IspG family. The cofactor is [4Fe-4S] cluster.

The enzyme catalyses (2E)-4-hydroxy-3-methylbut-2-enyl diphosphate + oxidized [flavodoxin] + H2O + 2 H(+) = 2-C-methyl-D-erythritol 2,4-cyclic diphosphate + reduced [flavodoxin]. Its pathway is isoprenoid biosynthesis; isopentenyl diphosphate biosynthesis via DXP pathway; isopentenyl diphosphate from 1-deoxy-D-xylulose 5-phosphate: step 5/6. In terms of biological role, converts 2C-methyl-D-erythritol 2,4-cyclodiphosphate (ME-2,4cPP) into 1-hydroxy-2-methyl-2-(E)-butenyl 4-diphosphate. This chain is 4-hydroxy-3-methylbut-2-en-1-yl diphosphate synthase (flavodoxin), found in Bacillus velezensis (strain DSM 23117 / BGSC 10A6 / LMG 26770 / FZB42) (Bacillus amyloliquefaciens subsp. plantarum).